The following is a 458-amino-acid chain: MEASITVLLFAFTKVASSLYYEGSGHSDGEIQTNEVYVESRPLGPYRAPRWCYDLHISDGEATCYSPLGPRYRSTLGTRCRLSCDQGFKLIGQSSVQCLSSRRWSGNGHCRRIQCHVLPPIFYGSYHCSVGVSEGSRCDYSCAPGYMVEGDRSRICMEDGQWSGGEPVCVDLDPPKIQCPVSRMKVAEPEKLTARIFWGNPQVKDSADGVITRVFLRGPEPGSELPEGEHVIRYTAYDRAHNRASCKFIVKVQVRRCPDLTPPLHGYLTCSAAGNNYGATCEYHCEGGYERQGPAARVCQFSQNWAGTPSTCTPMLINVNVNSAGAFIDQFFEKQRLLFISSPSSSDRYYRMQTTALQSSGCGLEQRHVLIVELIGESPREVGRVRNQQLSKELIEELRQVLRISRSYFNMVLIDKHGVDRDRYRQPTASEDIFLFIDTYLLSPRELSQVESNKENCD.

Positions 1–18 (MEASITVLLFAFTKVASS) are cleaved as a signal peptide. Sushi domains follow at residues 62-112 (ATCY…HCRR), 113-171 (IQCH…VCVD), and 255-314 (RRCP…TCTP). Cystine bridges form between Cys-64/Cys-98, Cys-84/Cys-110, Cys-115/Cys-156, and Cys-142/Cys-169. Residues 170-254 (VDLDPPKIQC…SCKFIVKVQV (85 aa)) enclose the HYR domain. 2 disulfide bridges follow: Cys-257–Cys-299 and Cys-285–Cys-312.

As to quaternary structure, forms homooligomers.

The protein resides in the secreted. It is found in the cytoplasm. It localises to the cell surface. Its subcellular location is the synapse. Functionally, may play a role in angiogenesis, synapse formation, cellular migration and adhesion. The chain is Sushi repeat-containing protein SRPX2 (srpx2) from Xenopus laevis (African clawed frog).